We begin with the raw amino-acid sequence, 462 residues long: A-type ATP synthase subunit B (462 aa).

This sequence belongs to the ATPase alpha/beta chains family. As to quaternary structure, has multiple subunits with at least A(3), B(3), C, D, E, F, H, I and proteolipid K(x).

Its subcellular location is the cell membrane. In terms of biological role, component of the A-type ATP synthase that produces ATP from ADP in the presence of a proton gradient across the membrane. The B chain is a regulatory subunit. This is A-type ATP synthase subunit B from Methanococcus maripaludis (strain C5 / ATCC BAA-1333).